The following is a 565-amino-acid chain: Laccase-12 (565 aa).

An N-terminal signal peptide occupies residues 1–24; that stretch reads MTTVHTFSILLFFCSLFSASLIIA. Plastocyanin-like domains are found at residues 32–148 and 158–310; these read VIQE…PTPG and RQTA…YKKT. Residue N78 is glycosylated (N-linked (GlcNAc...) asparagine). Cu cation contacts are provided by H82, H84, H127, and H129. 8 N-linked (GlcNAc...) asparagine glycosylation sites follow: N187, N203, N298, N325, N377, N387, N395, and N428. The Plastocyanin-like 3 domain occupies 413-549; it reads DFPSKPPVKF…AMAFLVDNGV (137 aa). Residues H466, H469, H471, H528, C529, H530, and H534 each coordinate Cu cation.

This sequence belongs to the multicopper oxidase family. It depends on Cu cation as a cofactor. In terms of tissue distribution, predominantly expressed in the inflorescence stem.

The protein resides in the secreted. It is found in the extracellular space. It localises to the apoplast. The enzyme catalyses 4 hydroquinone + O2 = 4 benzosemiquinone + 2 H2O. Functionally, lignin degradation and detoxification of lignin-derived products. The polypeptide is Laccase-12 (LAC12) (Arabidopsis thaliana (Mouse-ear cress)).